Reading from the N-terminus, the 333-residue chain is Adenosine deaminase (333 aa).

2 residues coordinate Zn(2+): histidine 12 and histidine 14. Residues histidine 14, aspartate 16, and glycine 170 each contribute to the substrate site. Histidine 197 contacts Zn(2+). Glutamate 200 functions as the Proton donor in the catalytic mechanism. Residue aspartate 278 participates in Zn(2+) binding. Aspartate 279 lines the substrate pocket.

The protein belongs to the metallo-dependent hydrolases superfamily. Adenosine and AMP deaminases family. Adenosine deaminase subfamily. Zn(2+) is required as a cofactor.

The enzyme catalyses adenosine + H2O + H(+) = inosine + NH4(+). It catalyses the reaction 2'-deoxyadenosine + H2O + H(+) = 2'-deoxyinosine + NH4(+). Functionally, catalyzes the hydrolytic deamination of adenosine and 2-deoxyadenosine. The chain is Adenosine deaminase from Salmonella typhi.